The chain runs to 918 residues: MTNYSLRARMMILILAPTVLIGLLLSIFFVVHRYNDLQRQLEDAGASIIEPLAVSTEYGMSLQNRESIGQLISVLHRRHSDIVRAISVYDENNRLFVTSNFHLDPSSMQLGSNVPFPRQLTVTRDGDIMILRTPIISESYSPDESPSSDAKNSQNMLGYIALELDLKSVRLQQYKEIFISSVMMLFCIGIALIFGWRLMRDVTGPIRNMVNTVDRIRRGQLDSRVEGFMLGELDMLKNGINSMAMSLAAYHEEMQHNIDQATSDLRETLEQMEIQNVELDLAKKRAQEAARIKSEFLANMSHELRTPLNGVIGFTRLTLKTELTPTQRDHLNTIERSANNLLAIINDVLDFSKLEAGKLILESIPFPLRSTLDEVVTLLAHSSHDKGLELTLNIKSDVPDNVIGDPLRLQQIITNLVGNAIKFTENGNIDILVEKRALSNTKVQIEVQIRDTGIGIPERDQSRLFQAFRQADASISRRHGGTGLGLVITQKLVNEMGGDISFHSQPNRGSTFWFHINLDLNPNIIIEGPSTQCLAGKRLAYVEPNSAAAQCTLDILSETPLEVVYSPTFSALPPAHYDMMLLGIAVTFREPLTMQHERLAKAVSMTDFLMLALPCHAQVNAEKLKQDGIGACLLKPLTPTRLLPALTEFCHHKQNTLLPVTDESKLAMTVMAVDDNPANLKLIGALLEDMVQHVELCDSGHQAVERAKQMPFDLILMDIQMPDMDGIRACELIHQLPHQQQTPVIAVTAHAMAGQKEKLLGAGMSDYLAKPIEEERLHNLLLRYKPGSGISSRVVTPEVNEIVVNPNATLDWQLALRQAAGKTDLARDMLQMLLDFLPEVRNKVEEQLVGENPEGLVDLIHKLHGSCGYSGVPRMKNLCQLIEQQLRSGTKEEDLEPELLELLDEMDNVAREASKILG.

The Cytoplasmic segment spans residues 1 to 9; it reads MTNYSLRAR. The chain crosses the membrane as a helical span at residues 10–31; it reads MMILILAPTVLIGLLLSIFFVV. The Periplasmic segment spans residues 32 to 176; sequence HRYNDLQRQL…KSVRLQQYKE (145 aa). Residues 177-196 form a helical membrane-spanning segment; sequence IFISSVMMLFCIGIALIFGW. Over 197 to 918 the chain is Cytoplasmic; it reads RLMRDVTGPI…VAREASKILG (722 aa). Positions 200–252 constitute an HAMP domain; that stretch reads RDVTGPIRNMVNTVDRIRRGQLDSRVEGFMLGELDMLKNGINSMAMSLAAYHE. The 222-residue stretch at 299-520 folds into the Histidine kinase domain; sequence NMSHELRTPL…TFWFHINLDL (222 aa). At H302 the chain carries Phosphohistidine; by autocatalysis. The 117-residue stretch at 669–785 folds into the Response regulatory domain; the sequence is TVMAVDDNPA…RLHNLLLRYK (117 aa). Position 718 is a 4-aspartylphosphate (D718). In terms of domain architecture, HPt spans 822 to 918; the sequence is KTDLARDMLQ…VAREASKILG (97 aa). Phosphohistidine is present on H861.

Activation requires a sequential transfer of a phosphate group from a His in the primary transmitter domain, to an Asp in the receiver domain and to a His in the secondary transmitter domain.

Its subcellular location is the cell inner membrane. The enzyme catalyses ATP + protein L-histidine = ADP + protein N-phospho-L-histidine.. Functionally, member of the two-component regulatory system UvrY/BarA involved in the regulation of carbon metabolism via the CsrA/CsrB regulatory system. Phosphorylates UvrY, probably via a four-step phosphorelay. This chain is Signal transduction histidine-protein kinase BarA (barA), found in Escherichia coli O157:H7.